Here is a 266-residue protein sequence, read N- to C-terminus: Gasdermin bGSDM (266 aa).

4 beta stranded membrane-spanning segments follow: residues 65–81, 93–113, 162–181, and 187–203; these read FSGQ…GADL, EDKL…FAYE, QFTV…EAAV, and AHAS…SLQT. Residues 248 to 266 are C-terminal region; that stretch reads GEEDFSVQPLQAPSGLLKL.

It belongs to the bacterial gasdermin family. In terms of assembly, monomer. As to quaternary structure, forms large, homooligomeric ring-shaped pores when inserted in membranes.

It localises to the cytoplasm. Its subcellular location is the cell membrane. The full-length protein before cleavage is inactive: intramolecular interactions between the N-terminal domain and the C-terminal region mediate autoinhibition. The pyroptosis-like-inducing activity is carried by the released N-terminal domain (Gasdermin bGSDM, N-terminus). In terms of biological role, precursor of a pore-forming protein involved in defense against bacteriophages. Cleavage of this precursor by its dedicated protease releases the active moiety (gasdermin bGSDM, N-terminus) which inserts into membranes, forming pores and triggering cell death. Expression of bGSDM and the neighboring protease gene (Ga0307981_100051430) is highly toxic in E.coli. Functionally, pore-forming protein that causes membrane permeabilization via a pyroptosis-like activity. This is the active form which makes ring-like pores with an interior pore diameter of 130-190 Angstroms, when integrated in liposomes. In Unknown prokaryotic organism, this protein is Gasdermin bGSDM.